We begin with the raw amino-acid sequence, 174 residues long: ATP synthase subunit d, mitochondrial (174 aa).

Serine 2 is subject to N-acetylserine.

The protein belongs to the ATPase d subunit family.

The protein localises to the mitochondrion inner membrane. In terms of biological role, mitochondrial membrane ATP synthase (F(1)F(0) ATP synthase or Complex V) produces ATP from ADP in the presence of a proton gradient across the membrane which is generated by electron transport complexes of the respiratory chain. F-type ATPases consist of two structural domains, F(1) - containing the extramembraneous catalytic core, and F(0) - containing the membrane proton channel, linked together by a central stalk and a peripheral stalk. During catalysis, ATP synthesis in the catalytic domain of F(1) is coupled via a rotary mechanism of the central stalk subunits to proton translocation. Part of the complex F(0) domain and the peripheric stalk, which acts as a stator to hold the catalytic alpha(3)beta(3) subcomplex and subunit a/ATP6 static relative to the rotary elements. The chain is ATP synthase subunit d, mitochondrial (ATP7) from Kluyveromyces lactis (strain ATCC 8585 / CBS 2359 / DSM 70799 / NBRC 1267 / NRRL Y-1140 / WM37) (Yeast).